Reading from the N-terminus, the 318-residue chain is Ribosomal RNA small subunit methyltransferase H (318 aa).

S-adenosyl-L-methionine is bound by residues G33 to H35, D53, F80, D101, and Q108.

It belongs to the methyltransferase superfamily. RsmH family.

The protein resides in the cytoplasm. The enzyme catalyses cytidine(1402) in 16S rRNA + S-adenosyl-L-methionine = N(4)-methylcytidine(1402) in 16S rRNA + S-adenosyl-L-homocysteine + H(+). In terms of biological role, specifically methylates the N4 position of cytidine in position 1402 (C1402) of 16S rRNA. This is Ribosomal RNA small subunit methyltransferase H from Symbiobacterium thermophilum (strain DSM 24528 / JCM 14929 / IAM 14863 / T).